Consider the following 481-residue polypeptide: Beta-amyrin 16-beta-monooxygenase (481 aa).

Residues 4–24 (LFIIISLVIVILTTIFILSNL) traverse the membrane as a helical segment. A heme-binding site is contributed by Cys-428.

This sequence belongs to the cytochrome P450 family. Heme serves as cofactor. In terms of tissue distribution, highly expressed in roots. Expressed at very low levels in leaves and petals.

Its subcellular location is the membrane. The catalysed reaction is beta-amyrin + reduced [NADPH--hemoprotein reductase] + O2 = maniladiol + oxidized [NADPH--hemoprotein reductase] + H2O + H(+). It catalyses the reaction oleanolate + reduced [NADPH--hemoprotein reductase] + O2 = cochalate + oxidized [NADPH--hemoprotein reductase] + H2O + H(+). In terms of biological role, involved in triterpenoid saponin biosynthesis in roots. Catalyzes the hydroxylation of beta-amyrin at the C-16 beta position to form maniladiol. Is also able to oxidize oleanolat to cochalate. Has weak activity catalyzing the three-step oxidation at C-28 of beta-amyrin to form oleanolate. This chain is Beta-amyrin 16-beta-monooxygenase, found in Platycodon grandiflorus (Balloon flower).